A 114-amino-acid chain; its full sequence is NADH-ubiquinone oxidoreductase chain 3 (114 aa).

3 helical membrane-spanning segments follow: residues 1–21 (MIFY…MLFF), 55–75 (FFFV…ILPF), and 85–105 (MFVF…LYEF).

The protein belongs to the complex I subunit 3 family.

It is found in the mitochondrion membrane. The enzyme catalyses a ubiquinone + NADH + 5 H(+)(in) = a ubiquinol + NAD(+) + 4 H(+)(out). Its function is as follows. Core subunit of the mitochondrial membrane respiratory chain NADH dehydrogenase (Complex I) that is believed to belong to the minimal assembly required for catalysis. Complex I functions in the transfer of electrons from NADH to the respiratory chain. The immediate electron acceptor for the enzyme is believed to be ubiquinone. This is NADH-ubiquinone oxidoreductase chain 3 (ND3) from Rhipicephalus sanguineus (Brown dog tick).